We begin with the raw amino-acid sequence, 1081 residues long: FHIP family protein GA25918 (1081 aa).

A compositionally biased stretch (polar residues) spans 1–11 (MSWLRSSPLRQ). Disordered regions lie at residues 1-31 (MSWL…GSLR), 504-524 (ARPK…EQPI), 650-685 (ADEE…MGGG), 830-913 (NENS…AASS), and 933-1027 (NNNN…SEPA). S508 carries the post-translational modification Phosphoserine. Positions 657–668 (TDLTVTTTTASE) are enriched in low complexity. Residue S833 is modified to Phosphoserine. Residues 840–856 (QPQTTLSQQQQQQQGQQ) are compositionally biased toward low complexity. Polar residues predominate over residues 857–876 (RSAYATLSAATPVQATQTSA). Composition is skewed to low complexity over residues 891 to 913 (SKSI…AASS) and 933 to 953 (NNNN…GTGT). Positions 954–963 (CETSLSTNPQ) are enriched in polar residues. Low complexity predominate over residues 964 to 993 (SGAAAARSTGTATTANGNSSNSNISIGGST). Residues 994 to 1010 (QTLSGHSNTTTYSSSTL) show a composition bias toward polar residues.

It belongs to the FHIP family.

The protein is FHIP family protein GA25918 of Drosophila pseudoobscura pseudoobscura (Fruit fly).